Reading from the N-terminus, the 657-residue chain is ABC1 family protein YPL109C, mitochondrial (657 aa).

A mitochondrion-targeting transit peptide spans 1–15 (MSFLKFAYRNSWRYY).

This sequence belongs to the protein kinase superfamily. ADCK protein kinase family.

Its subcellular location is the mitochondrion. The polypeptide is ABC1 family protein YPL109C, mitochondrial (Saccharomyces cerevisiae (strain ATCC 204508 / S288c) (Baker's yeast)).